The following is a 317-amino-acid chain: NADPH-dependent D-xylose reductase (317 aa).

Catalysis depends on Tyr47, which acts as the Proton donor. A substrate-binding site is contributed by His109. Residues Ser164–Asn165, Ser213–Glu222, and Lys269–Asn279 contribute to the NADP(+) site.

This sequence belongs to the aldo/keto reductase family.

The enzyme catalyses xylitol + NAD(+) = D-xylose + NADH + H(+). The catalysed reaction is xylitol + NADP(+) = D-xylose + NADPH + H(+). It functions in the pathway carbohydrate metabolism; D-xylose degradation. Reduces D-xylose into xylitol. Preferentially utilizes NADPH as a cosubstrate. The chain is NADPH-dependent D-xylose reductase (XYL1) from Meyerozyma guilliermondii (strain ATCC 6260 / CBS 566 / DSM 6381 / JCM 1539 / NBRC 10279 / NRRL Y-324) (Yeast).